Here is a 336-residue protein sequence, read N- to C-terminus: DNA-directed RNA polymerase subunit alpha (336 aa).

Positions 1–233 are alpha N-terminal domain (alpha-NTD); sequence MSSNSFLTPR…EQFSFFADLE (233 aa). Residues 247 to 336 form an alpha C-terminal domain (alpha-CTD) region; that stretch reads IDPILLRPVD…YIKEPGHASS (90 aa).

This sequence belongs to the RNA polymerase alpha chain family. Homodimer. The RNAP catalytic core consists of 2 alpha, 1 beta, 1 beta' and 1 omega subunit. When a sigma factor is associated with the core the holoenzyme is formed, which can initiate transcription.

The catalysed reaction is RNA(n) + a ribonucleoside 5'-triphosphate = RNA(n+1) + diphosphate. Functionally, DNA-dependent RNA polymerase catalyzes the transcription of DNA into RNA using the four ribonucleoside triphosphates as substrates. The chain is DNA-directed RNA polymerase subunit alpha from Nitrosomonas europaea (strain ATCC 19718 / CIP 103999 / KCTC 2705 / NBRC 14298).